The primary structure comprises 386 residues: Chaperone protein DnaJ (386 aa).

The J domain occupies 4 to 68 (NFYDVLGVSR…QKRQQYDQLG (65 aa)). Composition is skewed to basic and acidic residues over residues 22 to 35 (KAYR…HPDV) and 43 to 79 (ERFK…DKRG). Residues 22–132 (KAYRKQAAEH…GGNRPRQGQD (111 aa)) form a disordered region. Composition is skewed to gly residues over residues 80–104 (ATGG…GAGG) and 113–125 (FGGG…GGGN). The CR-type zinc finger occupies 147 to 229 (GATKEVTLTR…CGGDGVVREE (83 aa)). Residues Cys-160, Cys-163, Cys-177, Cys-180, Cys-203, Cys-206, Cys-217, and Cys-220 each coordinate Zn(2+). CXXCXGXG motif repeat units follow at residues 160–167 (CDTCDGAG), 177–184 (CSQCNGRG), 203–210 (CPRCEGSG), and 217–224 (CADCGGDG).

The protein belongs to the DnaJ family. In terms of assembly, homodimer. It depends on Zn(2+) as a cofactor.

The protein resides in the cytoplasm. Functionally, participates actively in the response to hyperosmotic and heat shock by preventing the aggregation of stress-denatured proteins and by disaggregating proteins, also in an autonomous, DnaK-independent fashion. Unfolded proteins bind initially to DnaJ; upon interaction with the DnaJ-bound protein, DnaK hydrolyzes its bound ATP, resulting in the formation of a stable complex. GrpE releases ADP from DnaK; ATP binding to DnaK triggers the release of the substrate protein, thus completing the reaction cycle. Several rounds of ATP-dependent interactions between DnaJ, DnaK and GrpE are required for fully efficient folding. Also involved, together with DnaK and GrpE, in the DNA replication of plasmids through activation of initiation proteins. The polypeptide is Chaperone protein DnaJ (Halorubrum lacusprofundi (strain ATCC 49239 / DSM 5036 / JCM 8891 / ACAM 34)).